Reading from the N-terminus, the 565-residue chain is Glycine/sarcosine/dimethylglycine N-methyltransferase (565 aa).

The span at 1-10 shows a compositional bias: basic and acidic residues; the sequence is MTKSVDDLAR. Residues 1 to 34 form a disordered region; sequence MTKSVDDLARGDQAGDEQDPVHREQQTFGDNPLE. Residues Y45, W53, R62, A86, D107, 134–135, and L152 each bind S-adenosyl-L-methionine; that span reads DW. Residues N154, R187, and Y226 each coordinate substrate.

Belongs to the class I-like SAM-binding methyltransferase superfamily. Glycine N-methyltransferase family. In terms of assembly, monomer.

It catalyses the reaction glycine + 2 S-adenosyl-L-methionine = N,N-dimethylglycine + 2 S-adenosyl-L-homocysteine + 2 H(+). The enzyme catalyses sarcosine + 2 S-adenosyl-L-methionine = glycine betaine + 2 S-adenosyl-L-homocysteine + 2 H(+). The catalysed reaction is glycine + S-adenosyl-L-methionine = sarcosine + S-adenosyl-L-homocysteine + H(+). It carries out the reaction sarcosine + S-adenosyl-L-methionine = N,N-dimethylglycine + S-adenosyl-L-homocysteine + H(+). It catalyses the reaction N,N-dimethylglycine + S-adenosyl-L-methionine = glycine betaine + S-adenosyl-L-homocysteine + H(+). Its pathway is amine and polyamine biosynthesis; betaine biosynthesis via glycine pathway; betaine from glycine: step 1/3. It participates in amine and polyamine biosynthesis; betaine biosynthesis via glycine pathway; betaine from glycine: step 2/3. The protein operates within amine and polyamine biosynthesis; betaine biosynthesis via glycine pathway; betaine from glycine: step 3/3. In terms of biological role, catalyzes the methylation of glycine, sarcosine and dimethylglycine to sarcosine, dimethylglycine and betaine, respectively, with S-adenosylmethionine (AdoMet) acting as the methyl donor. Shows low level of activity on glycine when expressed in E.coli. This Actinopolyspora halophila protein is Glycine/sarcosine/dimethylglycine N-methyltransferase.